A 432-amino-acid polypeptide reads, in one-letter code: Lysosomal acid phosphatase (432 aa).

The N-terminal stretch at 1–32 (MADGSCLGSGPQLGLIALLVVLLFSAVPLAQS) is a signal peptide. The Lumenal portion of the chain corresponds to 33–384 (RELRFVTLVY…TTSFIMTEET (352 aa)). The active-site Nucleophile is His44. 5 N-linked (GlcNAc...) asparagine glycosylation sites follow: Asn94, Asn135, Asn179, Asn193, and Asn269. Intrachain disulfides connect Cys161/Cys373, Cys214/Cys313, and Cys348/Cys352. The active-site Proton donor is the Asp290. Asn325 and Asn334 each carry an N-linked (GlcNAc...) asparagine glycan. Residues 385-405 (IIGLTIGAIALFIIIVVLMLL) form a helical membrane-spanning segment. At 406-432 (SCNEPKDDGYQHVSDEGDDHETKGLAM) the chain is on the cytoplasmic side.

It belongs to the histidine acid phosphatase family. The membrane-bound form is converted to the soluble form by sequential proteolytic processing. First, the C-terminal cytoplasmic tail is removed. Cleavage by a lysosomal protease releases the soluble form in the lysosome lumen.

Its subcellular location is the lysosome membrane. The protein localises to the lysosome lumen. It carries out the reaction a phosphate monoester + H2O = an alcohol + phosphate. In Xenopus laevis (African clawed frog), this protein is Lysosomal acid phosphatase (acp2).